A 752-amino-acid chain; its full sequence is Coiled-coil domain-containing protein 157 (752 aa).

Residues 135-154 are compositionally biased toward polar residues; that stretch reads QQPLPQKGANQRETPTSKPT. Disordered regions lie at residues 135-163 and 316-336; these read QQPLPQKGANQRETPTSKPTTKGEPARSP and QALKQEQGARRRQAEEDEQCL. Coiled coils occupy residues 276-544 and 579-615; these read AAEQ…LLVA and DHMERQVQSNDIRIRVLQEENGRLQSMLSKIREVAQQ. Residues 316–329 are compositionally biased toward basic and acidic residues; sequence QALKQEQGARRRQA. Disordered stretches follow at residues 620–707 and 731–752; these read LIPQ…QPSK and RKRLSPGRGQASSAHQPQERPM. The segment covering 628–648 has biased composition (polar residues); sequence SPSSKGTQGATPPVQAKSTSP. Residues 671 to 692 are compositionally biased toward pro residues; the sequence is TSPPRQPCTSPPRQPCTSPPRQ. The segment covering 693–707 has biased composition (polar residues); the sequence is PCTSPSRQPCSQPSK.

The polypeptide is Coiled-coil domain-containing protein 157 (CCDC157) (Homo sapiens (Human)).